Consider the following 674-residue polypeptide: Collagen alpha-1(X) chain (674 aa).

A signal peptide spans Met1 to Gly18. A nonhelical region (NC2) region spans residues Ser19 to Arg52. The interval Val49–Gly517 is disordered. The tract at residues Gly53–Ser512 is triple-helical region. Residues Pro83 to Pro92 are compositionally biased toward pro residues. Residues Pro110–Glu121 are compositionally biased toward basic and acidic residues. Composition is skewed to low complexity over residues Arg191 to Pro207, Ile270 to Ser285, Gln387 to Lys402, and Pro437 to Pro446. Pro453 and Pro456 each carry hydroxyproline. Over residues Ala455 to Met482 the composition is skewed to low complexity. The span at Leu499–Pro509 shows a compositional bias: pro residues. The tract at residues Thr513–Ile674 is nonhelical region (NC1). Positions Thr541–Ile674 constitute a C1q domain. Ca(2+)-binding residues include Asp620, Glu621, Leu627, and Asp628.

As to quaternary structure, homotrimer. Post-translationally, prolines at the third position of the tripeptide repeating unit (G-X-Y) are hydroxylated in some or all of the chains.

It is found in the secreted. The protein localises to the extracellular space. Its subcellular location is the extracellular matrix. Functionally, type X collagen is a product of hypertrophic chondrocytes and has been localized to presumptive mineralization zones of hyaline cartilage. The sequence is that of Collagen alpha-1(X) chain (COL10A1) from Gallus gallus (Chicken).